A 1107-amino-acid polypeptide reads, in one-letter code: DNA polymerase delta catalytic subunit (1107 aa).

The segment at 1-34 (MDGKRRPGPGPGVPPKRARGGLWDDDDAPRPSQF) is disordered. The Nuclear localization signal motif lies at 4 to 19 (KRRPGPGPGVPPKRAR). Residue Arg-19 is modified to Omega-N-methylarginine. Lys-574 participates in a covalent cross-link: Glycyl lysine isopeptide (Lys-Gly) (interchain with G-Cter in SUMO2). Residues Cys-1012, Cys-1015, Cys-1026, and Cys-1029 each coordinate Zn(2+). The CysA-type zinc-finger motif lies at 1012–1029 (CIGCRTVLSHQGAVCEFC). Positions 1058, 1061, 1071, and 1076 each coordinate [4Fe-4S] cluster. Positions 1058-1076 (CQRCQGSLHEDVICTSRDC) match the CysB motif motif.

This sequence belongs to the DNA polymerase type-B family. As to quaternary structure, component of the tetrameric DNA polymerase delta complex (Pol-delta4), which consists of POLD1/p125, POLD2/p50, POLD3/p66/p68 and POLD4/p12, with POLD1 bearing both DNA polymerase and 3' to 5' proofreading exonuclease activities. Within Pol-delta4, directly interacts with POLD2 and POLD4. Following genotoxic stress by DNA-damaging agents, such as ultraviolet light and methyl methanesulfonate, or by replication stress induced by treatment with hydroxyurea or aphidicolin, Pol-delta4 is converted into a trimeric form of the complex (Pol-delta3) by POLD4 degradation. Pol-delta3 is the major form at S phase replication sites and DNA damage sites. POLD1 displays different catalytic properties depending upon the complex it is found in. It exhibits higher proofreading activity and fidelity than Pol-delta4, making it particularly well suited to respond to DNA damage. Directly interacts with PCNA, as do POLD3 and POLD4; this interaction stimulates Pol-delta4 polymerase activity. As POLD2 and POLD4, directly interacts with WRNIP1; this interaction stimulates DNA polymerase delta-mediated DNA synthesis, independently of the presence of PCNA. This stimulation may be due predominantly to an increase of initiation frequency and also to increased processivity. Also observed as a dimeric complex with POLD2 (Pol-delta2 complex). Pol-delta2 is relatively insensitive to the PCNA stimulation (2-5-fold) compared to Pol-delta4 that is stimulated by over 50-fold. The DNA polymerase delta complex interacts with POLDIP2; this interaction is probably mediated through direct binding to POLD2. Interacts with CIAO1. Interacts with POLDIP2. Interacts with RFC1. [4Fe-4S] cluster is required as a cofactor. In terms of tissue distribution, widely expressed, with high levels of expression in heart and lung.

The protein localises to the nucleus. The enzyme catalyses DNA(n) + a 2'-deoxyribonucleoside 5'-triphosphate = DNA(n+1) + diphosphate. Regulated by alteration of quaternary structure. Exhibits burst rates of DNA synthesis are about 5 times faster in the presence of POLD4 (Pol-delta4 complex) than in its absence (Pol-delta3 complex), while the affinity of the enzyme for its DNA and dNTP substrates appears unchanged. The Pol-delta3 complex is more likely to proofread DNA synthesis because it cleaves single-stranded DNA twice as fast and transfers mismatched DNA from the polymerase to the exonuclease sites 9 times faster compared to the Pol-delta3 complex. Pol-delta3 also extends mismatched primers 3 times more slowly in the absence of POLD4. The conversion of Pol-delta4 into Pol-delta3 is induced by genotoxic stress or by replication stress leading POLD4 degradation. Stimulated in the presence of PCNA. This stimulation is further increased in the presence of KCTD13/PDIP1, most probably via direct interaction between KCTD13 and POLD2. Functionally, as the catalytic component of the trimeric (Pol-delta3 complex) and tetrameric DNA polymerase delta complexes (Pol-delta4 complex), plays a crucial role in high fidelity genome replication, including in lagging strand synthesis, and repair. Exhibits both DNA polymerase and 3'- to 5'-exonuclease activities. Requires the presence of accessory proteins POLD2, POLD3 and POLD4 for full activity. Depending upon the absence (Pol-delta3) or the presence of POLD4 (Pol-delta4), displays differences in catalytic activity. Most notably, expresses higher proofreading activity in the context of Pol-delta3 compared with that of Pol-delta4. Although both Pol-delta3 and Pol-delta4 process Okazaki fragments in vitro, Pol-delta3 may be better suited to fulfill this task, exhibiting near-absence of strand displacement activity compared to Pol-delta4 and stalling on encounter with the 5'-blocking oligonucleotides. Pol-delta3 idling process may avoid the formation of a gap, while maintaining a nick that can be readily ligated. Along with DNA polymerase kappa, DNA polymerase delta carries out approximately half of nucleotide excision repair (NER) synthesis following UV irradiation. Under conditions of DNA replication stress, in the presence of POLD3 and POLD4, may catalyze the repair of broken replication forks through break-induced replication (BIR). Involved in the translesion synthesis (TLS) of templates carrying O6-methylguanine, 8oxoG or abasic sites. The protein is DNA polymerase delta catalytic subunit of Homo sapiens (Human).